Reading from the N-terminus, the 330-residue chain is D-alanine--D-alanine ligase (330 aa).

Positions 120 to 326 constitute an ATP-grasp domain; sequence KLWYDALGIP…FKTFLQKAVL (207 aa). 150-205 serves as a coordination point for ATP; it reads AFKQWGGLFVKAACQGSSVGCYKVTSEEELAQAINGAFGYSQQVLVEKAVKPRELE. Positions 280, 293, and 295 each coordinate Mg(2+).

This sequence belongs to the D-alanine--D-alanine ligase family. Mg(2+) is required as a cofactor. It depends on Mn(2+) as a cofactor.

The protein localises to the cytoplasm. The catalysed reaction is 2 D-alanine + ATP = D-alanyl-D-alanine + ADP + phosphate + H(+). It functions in the pathway cell wall biogenesis; peptidoglycan biosynthesis. Cell wall formation. The sequence is that of D-alanine--D-alanine ligase from Aliivibrio fischeri (strain MJ11) (Vibrio fischeri).